The chain runs to 704 residues: Neutral ceramidase (704 aa).

An N-terminal signal peptide occupies residues 1-23; sequence MANSKMAFLAFLAVSFLCGLVSA. N-linked (GlcNAc...) asparagine glycosylation is present at Asn230. Ser276 (nucleophile) is an active-site residue. 3 N-linked (GlcNAc...) asparagine glycosylation sites follow: Asn362, Asn550, and Asn598.

It belongs to the neutral ceramidase family. N-glycosylated. As to expression, widely expressed in different tissues but enriched in neurons at all stages of development.

It is found in the secreted. It catalyses the reaction an N-acylsphing-4-enine + H2O = sphing-4-enine + a fatty acid. In terms of biological role, hydrolyzes the sphingolipid ceramide into sphingosine and free fatty acid at an optimal pH of 6.5-7.5. Acts as a key regulator of sphingolipid signaling metabolites by generating sphingosine at the cell surface. Regulates synaptic vesicle exocytosis and trafficking by controlling presynaptic terminal sphingolipid composition. This is Neutral ceramidase (CDase) from Drosophila melanogaster (Fruit fly).